Reading from the N-terminus, the 268-residue chain is 4-pyridoxolactonase (268 aa).

Zn(2+) is bound by residues H96, H98, D100, H101, H185, D207, and H252. Catalysis depends on D100, which acts as the Proton donor/acceptor.

The protein belongs to the metallo-beta-lactamase superfamily. In terms of assembly, homodimer. The cofactor is Zn(2+).

It carries out the reaction 4-pyridoxolactone + H2O = 4-pyridoxate + H(+). The protein operates within cofactor degradation; B6 vitamer degradation; 4-pyridoxate from pyridoxal: step 2/2. Its activity is regulated as follows. Inhibited by Hg(2+). Its function is as follows. Involved in the degradation of pyridoxine or pyridoxamine (free, phosphate-unbound, forms of vitamin B6). Hydrolyzes 4-pyridoxolactone to 4-pyridoxic acid. Has lower activity toward N-hexanoyl-D,L-homoserine lactone, but is not active toward 5-pyridoxolactone and gamma-butyrolactone. This Mesorhizobium japonicum (strain LMG 29417 / CECT 9101 / MAFF 303099) (Mesorhizobium loti (strain MAFF 303099)) protein is 4-pyridoxolactonase.